The primary structure comprises 709 residues: RxLR effector protein PITG_15110 (709 aa).

The signal sequence occupies residues 1-18 (MHAYSAAVLMGLLMVAEG). The short motif at 51-66 (RLLREPETTEASNEDR) is the RxLR-dEER element.

This sequence belongs to the RxLR effector family.

It localises to the secreted. The protein localises to the host cytoplasm. It is found in the host cytoskeleton. In terms of biological role, effector that enhances P.infestans colonization of Nicotiana benthamiana leaves. The chain is RxLR effector protein PITG_15110 from Phytophthora infestans (strain T30-4) (Potato late blight agent).